We begin with the raw amino-acid sequence, 114 residues long: MAEITSAKAMARTVRVSPRKSRLVLDNIRGKNVADAIAILKFTPNKAAGIIEKVLNSAIANAENNFGLEKANLVVSEAFANEGPTMKRFRPRAKGSASPINKRTSHITVVVAEK.

This sequence belongs to the universal ribosomal protein uL22 family. Part of the 50S ribosomal subunit.

In terms of biological role, this protein binds specifically to 23S rRNA; its binding is stimulated by other ribosomal proteins, e.g. L4, L17, and L20. It is important during the early stages of 50S assembly. It makes multiple contacts with different domains of the 23S rRNA in the assembled 50S subunit and ribosome. The globular domain of the protein is located near the polypeptide exit tunnel on the outside of the subunit, while an extended beta-hairpin is found that lines the wall of the exit tunnel in the center of the 70S ribosome. This chain is Large ribosomal subunit protein uL22, found in Streptococcus sanguinis (strain SK36).